A 444-amino-acid polypeptide reads, in one-letter code: Guanosine nucleotide diphosphate dissociation inhibitor 2 (444 aa).

Belongs to the Rab GDI family. In terms of tissue distribution, expressed in roots and floral buds.

Functionally, regulates the GDP/GTP exchange reaction of most RAB proteins by inhibiting the dissociation of GDP from them, and the subsequent binding of GTP. The protein is Guanosine nucleotide diphosphate dissociation inhibitor 2 (GDI2) of Arabidopsis thaliana (Mouse-ear cress).